The primary structure comprises 433 residues: Agnestins efflux protein AgnL12 (433 aa).

Composition is skewed to polar residues over residues 1–10 and 25–40; these read MSRSTSTELQ and SIAS…PPST. The segment at 1 to 40 is disordered; sequence MSRSTSTELQQELPASKEVPPDPTSIASSETASGSKPPST. The next 12 helical transmembrane spans lie at 47–67, 87–107, 116–136, 141–161, 174–194, 205–225, 248–268, 285–305, 309–329, 335–355, 370–390, and 401–421; these read ILVL…TNAF, ISWI…ISGY, LLIC…SLST, IFLT…LPAM, LAMG…PIAL, WTVR…CLAI, VMIF…SPFF, FYMV…PGLI, VGNY…ACCW, VGGI…VISL, GVAM…GTPI, and LGLS…ILLA.

It belongs to the major facilitator superfamily. Monocarboxylate porter (TC 2.A.1.13) family.

The protein resides in the cell membrane. Functionally, efflux pump that may be involved in the secretion of agnestins, dihydroxy-xanthone metabolites. The sequence is that of Agnestins efflux protein AgnL12 from Paecilomyces divaricatus (Penicillium divaricatum).